Consider the following 210-residue polypeptide: Thioredoxin-like 3-1, chloroplastic (210 aa).

Positions 81–210 (WRLKAFWSNI…EVRELINKFV (130 aa)) constitute a Thioredoxin domain. Residues cysteine 130 and cysteine 133 each act as nucleophile in the active site. A disulfide bridge links cysteine 130 with cysteine 133.

The protein belongs to the thioredoxin family.

It localises to the plastid. Its subcellular location is the chloroplast stroma. Functionally, probable thiol-disulfide oxidoreductase that may participate in various redox reactions. The protein is Thioredoxin-like 3-1, chloroplastic (WCRKC1) of Arabidopsis thaliana (Mouse-ear cress).